The sequence spans 272 residues: 4-hydroxy-tetrahydrodipicolinate reductase (272 aa).

NAD(+) is bound by residues 10–15 (GAGGRM), E36, 100–102 (GTT), and 124–127 (SGNM). H157 (proton donor/acceptor) is an active-site residue. H158 contributes to the (S)-2,3,4,5-tetrahydrodipicolinate binding site. The active-site Proton donor is the K161. 167-168 (GT) is a binding site for (S)-2,3,4,5-tetrahydrodipicolinate.

Belongs to the DapB family.

The protein localises to the cytoplasm. The enzyme catalyses (S)-2,3,4,5-tetrahydrodipicolinate + NAD(+) + H2O = (2S,4S)-4-hydroxy-2,3,4,5-tetrahydrodipicolinate + NADH + H(+). The catalysed reaction is (S)-2,3,4,5-tetrahydrodipicolinate + NADP(+) + H2O = (2S,4S)-4-hydroxy-2,3,4,5-tetrahydrodipicolinate + NADPH + H(+). It participates in amino-acid biosynthesis; L-lysine biosynthesis via DAP pathway; (S)-tetrahydrodipicolinate from L-aspartate: step 4/4. Its function is as follows. Catalyzes the conversion of 4-hydroxy-tetrahydrodipicolinate (HTPA) to tetrahydrodipicolinate. This chain is 4-hydroxy-tetrahydrodipicolinate reductase, found in Afipia carboxidovorans (strain ATCC 49405 / DSM 1227 / KCTC 32145 / OM5) (Oligotropha carboxidovorans).